A 1620-amino-acid polypeptide reads, in one-letter code: DNA (cytosine-5)-methyltransferase 1 (1620 aa).

Residues Met1–Pro21 are disordered. An interaction with DMAP1 region spans residues Met1 to Ala120. Residues Met1 to Leu145 are interaction with DNMT3A. Interaction with the PRC2/EED-EZH2 complex stretches follow at residues Met1 to Lys343 and Ala305 to Gly609. Ser15 is modified (phosphoserine). The DMAP1-binding domain occupies Pro16 to Asn109. An N6,N6-dimethyllysine; by EHMT2 modification is found at Lys70. Positions Thr96–Pro369 are disordered. Residues Pro126–Arg137 show a composition bias toward basic residues. Ser138 bears the Phosphoserine mark. Lys139 carries the N6-methyllysine; by SETD7 modification. Ser140 bears the Phosphoserine mark. Over residues Thr144–Ala155 the composition is skewed to polar residues. Position 146 is a phosphoserine; by CK1 (Ser146). Residues Val147–Leu217 are interaction with DNMT3B. A phosphoserine mark is found at Ser150 and Ser152. The interval Arg161–Gly172 is interaction with PCNA. Thr164 is modified (phosphothreonine). Lys171 is modified (N6-acetyllysine). The Nuclear localization signal motif lies at Lys175–Arg202. The span at Ala192–Asp205 shows a compositional bias: basic and acidic residues. Ser240 bears the Phosphoserine mark. Basic and acidic residues-rich tracts occupy residues Arg246–His267 and Gln286–Glu300. An N6-acetyllysine; alternate modification is found at Lys255. A Glycyl lysine isopeptide (Lys-Gly) (interchain with G-Cter in SUMO2); alternate cross-link involves residue Lys255. Positions Thr308–Arg317 are enriched in acidic residues. A DNA replication foci-targeting sequence region spans residues Lys328 to Leu556. Residues Cys359 and Cys362 each contribute to the Zn(2+) site. At Lys372 the chain carries N6-acetyllysine. Cys420 and His424 together coordinate Zn(2+). Phosphoserine is present on residues Ser515 and Ser555. Residues Asn649 to Pro695 form a CXXC-type zinc finger. Zn(2+)-binding residues include Cys656, Cys659, Cys662, Cys667, Cys670, Cys673, Cys689, and Cys694. An autoinhibitory linker region spans residues Asn696–Glu757. The tract at residues Asn696–Asp813 is interaction with HDAC1. Over residues Ala702 to Ser713 the composition is skewed to acidic residues. The segment at Ala702–Asp732 is disordered. Residues Ser713 and Ser717 each carry the phosphoserine modification. The segment covering Lys719–Asn730 has biased composition (basic residues). Ser735 carries the phosphoserine modification. An N6-acetyllysine modification is found at Lys752. The BAH 1 domain maps to Glu758–Pro884. At Ser882 the chain carries Phosphoserine. N6-acetyllysine is present on residues Lys895, Lys961, Lys965, and Lys979. A BAH 2 domain is found at His976–Pro1103. Positions Lys1097 to Ala1136 are disordered. 6 consecutive repeat copies span residues Lys1112–Gly1113, Lys1114–Gly1115, Lys1116–Gly1117, Lys1118–Gly1119, Lys1120–Gly1121, and Lys1122–Gly1123. The interval Lys1112–His1125 is 7 X 2 AA tandem repeats of K-G. Basic residues predominate over residues Gly1113–His1125. Lys1114, Lys1116, Lys1118, Lys1120, Lys1122, and Lys1124 each carry N6-acetyllysine. Residues Lys1124–His1125 form a 7; approximate repeat. An interaction with the PRC2/EED-EZH2 complex region spans residues Lys1124–Asp1620. A compositionally biased stretch (basic and acidic residues) spans Gln1126 to Ala1135. An SAM-dependent MTase C5-type domain is found at Leu1142–Ser1601. Positions Leu1142–Asp1620 are catalytic. S-adenosyl-L-methionine contacts are provided by residues Ser1149, Gly1153–Leu1154, Glu1171–Met1172, and Asp1193–Cys1194. Residue Cys1229 is part of the active site. N6-acetyllysine occurs at positions 1352 and 1418. Val1582 contributes to the S-adenosyl-L-methionine binding site. Lys1611 participates in a covalent cross-link: Glycyl lysine isopeptide (Lys-Gly) (interchain with G-Cter in SUMO2).

It belongs to the class I-like SAM-binding methyltransferase superfamily. C5-methyltransferase family. Homodimer. Forms a stable complex with E2F1, BB1 and HDAC1. Forms a complex with DMAP1 and HDAC2, with direct interaction. Interacts with the PRC2/EED-EZH2 complex. Probably part of a corepressor complex containing ZNF304, TRIM28, SETDB1 and DNMT1. Interacts with UHRF1; promoting its recruitment to hemimethylated DNA. Interacts with USP7, promoting its deubiquitination. Interacts with BAZ2A/TIP5. Interacts with PCNA. Interacts with MBD2 and MBD3. Interacts with DNMT3A and DNMT3B. Interacts with UBC9. Interacts with HDAC1. Interacts with CSNK1D. Interacts with SIRT7. Interacts with ZNF263; recruited to the SIX3 promoter along with other proteins involved in chromatin modification and transcriptional corepression where it contributes to transcriptional repression. Interacts with L3MBTL3 and DCAF5; the interaction requires DNMT1 methylation at Lys-139 and is necessary to target DNMT1 for ubiquitination by the CRL4-DCAF5 E3 ubiquitin ligase complex and proteasomal degradation. Interacts with PHF20L1; the interaction requires DNMT1 methylation at Lys-139 and protects DNMT1 from ubiquitination and proteasomal degradation. Sumoylated; sumoylation increases activity. Post-translationally, phosphorylation at Ser-146 by CK1 reduces DNA-binding activity. In terms of processing, acetylation on multiple lysines, mainly by KAT2B/PCAF, regulates cell cycle G(2)/M transition. Deacetylation of Lys-1352 and Lys-1418 by SIRT1 increases methyltransferase activity. Phosphorylation of Ser-152 by CDKs is important for enzymatic activity and protein stability. Phosphorylation of Ser-140 by AKT1 prevents methylation by SETD7 thereby increasing DNMT1 stability. Post-translationally, methylation at Lys-139 by SETD7 is necessary for the regulation of DNMT1 proteasomal degradation. In terms of processing, ubiquitinated by UHRF1; interaction with USP7 counteracts ubiquitination by UHRF1 by promoting deubiquitination and preventing degradation by the proteasome. As to expression, isoform 1 is expressed in embryonic stem cells and in somatic tissues. Isoform 2 is expressed in oocytes, preimplantation embryos, testis and in skeletal muscle during myogenesis.

Its subcellular location is the nucleus. The protein resides in the cytoplasm. The catalysed reaction is a 2'-deoxycytidine in DNA + S-adenosyl-L-methionine = a 5-methyl-2'-deoxycytidine in DNA + S-adenosyl-L-homocysteine + H(+). With respect to regulation, allosterically regulated. The binding of 5-methylcytosine-containing DNA to the N-terminal parts of DNMT1 causes an allosteric activation of the catalytic domain by a direct interaction of its Zn-binding domain with the catalytic domain. Functionally, methylates CpG residues. Preferentially methylates hemimethylated DNA. Associates with DNA replication sites in S phase maintaining the methylation pattern in the newly synthesized strand, that is essential for epigenetic inheritance. Associates with chromatin during G2 and M phases to maintain DNA methylation independently of replication. It is responsible for maintaining methylation patterns established in development. DNA methylation is coordinated with methylation of histones. Mediates transcriptional repression by direct binding to HDAC2. In association with DNMT3B and via the recruitment of CTCFL/BORIS, involved in activation of BAG1 gene expression by modulating dimethylation of promoter histone H3 at H3K4 and H3K9. Probably forms a corepressor complex required for activated KRAS-mediated promoter hypermethylation and transcriptional silencing of tumor suppressor genes (TSGs) or other tumor-related genes in colorectal cancer (CRC) cells. Also required to maintain a transcriptionally repressive state of genes in undifferentiated embryonic stem cells (ESCs). Associates at promoter regions of tumor suppressor genes (TSGs) leading to their gene silencing. Promotes tumor growth. In Mus musculus (Mouse), this protein is DNA (cytosine-5)-methyltransferase 1 (Dnmt1).